Here is a 512-residue protein sequence, read N- to C-terminus: 2-isopropylmalate synthase (512 aa).

The region spanning 5 to 268 (LIIFDTTLRD…ELGIDTQHIV (264 aa)) is the Pyruvate carboxyltransferase domain. D14, H202, H204, and N239 together coordinate Mn(2+). The tract at residues 394–512 (GFVSLSQRSE…SKAERVAAQG (119 aa)) is regulatory domain.

Belongs to the alpha-IPM synthase/homocitrate synthase family. LeuA type 1 subfamily. As to quaternary structure, homodimer. The cofactor is Mn(2+).

The protein localises to the cytoplasm. It carries out the reaction 3-methyl-2-oxobutanoate + acetyl-CoA + H2O = (2S)-2-isopropylmalate + CoA + H(+). It functions in the pathway amino-acid biosynthesis; L-leucine biosynthesis; L-leucine from 3-methyl-2-oxobutanoate: step 1/4. In terms of biological role, catalyzes the condensation of the acetyl group of acetyl-CoA with 3-methyl-2-oxobutanoate (2-ketoisovalerate) to form 3-carboxy-3-hydroxy-4-methylpentanoate (2-isopropylmalate). The polypeptide is 2-isopropylmalate synthase (Paracidovorax citrulli (strain AAC00-1) (Acidovorax citrulli)).